Reading from the N-terminus, the 422-residue chain is Dihydroorotase (422 aa).

Zn(2+) contacts are provided by histidine 59 and histidine 61. Residues 61-63 and asparagine 93 each bind substrate; that span reads HFR. The Zn(2+) site is built by aspartate 150, histidine 177, and histidine 230. Asparagine 276 serves as a coordination point for substrate. Position 303 (aspartate 303) interacts with Zn(2+). Residue aspartate 303 is part of the active site. Histidine 307 is a substrate binding site.

The protein belongs to the metallo-dependent hydrolases superfamily. DHOase family. Class I DHOase subfamily. Zn(2+) serves as cofactor.

The catalysed reaction is (S)-dihydroorotate + H2O = N-carbamoyl-L-aspartate + H(+). It functions in the pathway pyrimidine metabolism; UMP biosynthesis via de novo pathway; (S)-dihydroorotate from bicarbonate: step 3/3. Catalyzes the reversible cyclization of carbamoyl aspartate to dihydroorotate. In Streptococcus pyogenes serotype M1, this protein is Dihydroorotase.